Reading from the N-terminus, the 363-residue chain is 3-isopropylmalate dehydrogenase (363 aa).

78–91 lines the NAD(+) pocket; sequence GPKWENLPPESQPE. R99, R109, R138, and D227 together coordinate substrate. Mg(2+)-binding residues include D227, D251, and D255. NAD(+) is bound at residue 285–297; it reads GSAPDIAGKNIAN.

Belongs to the isocitrate and isopropylmalate dehydrogenases family. LeuB type 1 subfamily. As to quaternary structure, homodimer. Mg(2+) serves as cofactor. Requires Mn(2+) as cofactor.

The protein localises to the cytoplasm. It carries out the reaction (2R,3S)-3-isopropylmalate + NAD(+) = 4-methyl-2-oxopentanoate + CO2 + NADH. It functions in the pathway amino-acid biosynthesis; L-leucine biosynthesis; L-leucine from 3-methyl-2-oxobutanoate: step 3/4. Its function is as follows. Catalyzes the oxidation of 3-carboxy-2-hydroxy-4-methylpentanoate (3-isopropylmalate) to 3-carboxy-4-methyl-2-oxopentanoate. The product decarboxylates to 4-methyl-2 oxopentanoate. In Salmonella paratyphi A (strain ATCC 9150 / SARB42), this protein is 3-isopropylmalate dehydrogenase.